We begin with the raw amino-acid sequence, 704 residues long: Polyribonucleotide nucleotidyltransferase (704 aa).

D488 and D494 together coordinate Mg(2+). A KH domain is found at 555 to 614; the sequence is PRITTIKINPEKIRDVIGKGGATIRALTEETGTTIELDDDGTVKIASSNGEATKEAIRRI. An S1 motif domain is found at 624–692; the sequence is GTVYNGKVVR…RQGRVRLSMK (69 aa).

It belongs to the polyribonucleotide nucleotidyltransferase family. In terms of assembly, component of the RNA degradosome, which is a multiprotein complex involved in RNA processing and mRNA degradation. Mg(2+) is required as a cofactor.

It is found in the cytoplasm. The catalysed reaction is RNA(n+1) + phosphate = RNA(n) + a ribonucleoside 5'-diphosphate. Involved in mRNA degradation. Catalyzes the phosphorolysis of single-stranded polyribonucleotides processively in the 3'- to 5'-direction. The chain is Polyribonucleotide nucleotidyltransferase from Shewanella pealeana (strain ATCC 700345 / ANG-SQ1).